Here is an 850-residue protein sequence, read N- to C-terminus: MADFHISKVHELMMNQKNIRNISVIAHVDHGKSTLTDCLVIKAKIVSKDSGGGRYMDSREDEQQRGITIKSSAISLHFQVQKDVLEAYTKEGDTNGTEFLINLIDSPGHVDFSSEVTAALRVTDGALVVVDCVDGICVQTETVLGQAMNERIIPTLVLNKLDRAILELEYPQEKLGEVLRRRVEGFNAKLSTLGYNFKVESLLPEKNEISFCSGLQGWGFTLRQFARFYLEKFNMNGFEGERKLTNFLWSHKVSCTSDDPFDASIKHIAKPNPARSPFVVYVLNPIYKVKELCNNGKVEEIKEYLKFYKVDFKGVVLTGSGKSLFKEVMKTWLPAADCILEQIALKLPSPLQSQKLRYDYLYEGPADDEVANAIKMCDGSDEAPVSMYVSKMIPSNDNRFIAFGRVFSGKIFPGMKIRVQEPGYSPGSEELSNTSLIHNKSVLRTVVMMGRGYKDVPNCPAGNIIGIIGIDDCLKKTGTITNREAAHNIRSMKFSVSPVVKVAVSAKRPEDLGKLQEGLNKLAQSDPLCVVERNDKGQNTIACAGSLHLEICLKDLQDQYAKVPIIADDPLVTYFEGISCAVSDSKMTKSANKHNRIYMTVEPLDQNIVDNLKDVKSDQAKTMATNFREKLDIRDDWIRKIWCYAPEVNPLNLLVDGTKGISIINEIKEHVNTGFRAAVNDGPLIGEVMRGLKFELKDAVLHADAIHRGINQLLQPVKNLCKGLLLAAGPILYEPIYEVEITTPNDYSGAVTTILLSKRGTAEDFKTLPGNDTTMITGTLPVKESFTFNEDLKSGSRGKAGASMRFSHYSILPGNLEDPNSLMFKTVEAVRKLKKMNPAPPTPDSFFDRL.

The 335-residue stretch at 17–351 (KNIRNISVIA…QIALKLPSPL (335 aa)) folds into the tr-type G domain. Residues 26–33 (AHVDHGKS), 159–162 (NKLD), and 213–215 (SGL) each bind GTP. His-707 carries the post-translational modification Diphthamide.

Belongs to the TRAFAC class translation factor GTPase superfamily. Classic translation factor GTPase family. EF-G/EF-2 subfamily.

It is found in the cytoplasm. It carries out the reaction GTP + H2O = GDP + phosphate + H(+). It functions in the pathway protein biosynthesis; polypeptide chain elongation. Functionally, catalyzes the GTP-dependent ribosomal translocation step during translation elongation. During this step, the ribosome changes from the pre-translocational (PRE) to the post-translocational (POST) state as the newly formed A-site-bound peptidyl-tRNA and P-site-bound deacylated tRNA move to the P and E sites, respectively. Catalyzes the coordinated movement of the two tRNA molecules, the mRNA and conformational changes in the ribosome. This chain is Elongation factor 2 (EFT1), found in Encephalitozoon cuniculi (strain GB-M1) (Microsporidian parasite).